The following is a 168-amino-acid chain: Large ribosomal subunit protein uL10 (168 aa).

The protein belongs to the universal ribosomal protein uL10 family. In terms of assembly, part of the ribosomal stalk of the 50S ribosomal subunit. The N-terminus interacts with L11 and the large rRNA to form the base of the stalk. The C-terminus forms an elongated spine to which L12 dimers bind in a sequential fashion forming a multimeric L10(L12)X complex.

Functionally, forms part of the ribosomal stalk, playing a central role in the interaction of the ribosome with GTP-bound translation factors. The polypeptide is Large ribosomal subunit protein uL10 (Acidovorax ebreus (strain TPSY) (Diaphorobacter sp. (strain TPSY))).